The chain runs to 132 residues: ATP synthase epsilon chain (132 aa).

The protein belongs to the ATPase epsilon chain family. In terms of assembly, F-type ATPases have 2 components, CF(1) - the catalytic core - and CF(0) - the membrane proton channel. CF(1) has five subunits: alpha(3), beta(3), gamma(1), delta(1), epsilon(1). CF(0) has three main subunits: a, b and c.

Its subcellular location is the cell inner membrane. Its function is as follows. Produces ATP from ADP in the presence of a proton gradient across the membrane. This is ATP synthase epsilon chain from Anaeromyxobacter sp. (strain K).